Reading from the N-terminus, the 300-residue chain is MINSIRIGTRKSKLALTQTNLVIEQIKQHFPNINCEIVEITTSGDLIQNKPLYDIGGKALFLKEIEQALLNKKVDLAVHSLKDVPGIIPKDLSIEAVLEREDSRDVFVCLTHKSIEELPKNAVIGTSSVRRKLCVQRMRPDLEIIVFRGNVDSRINKLINKEVDATILAYAGLKRLNAFNPEYCHLIEHSQMLPCIGQGVIAIEIRKDDHDMIEICKQINHLPTFELIKPERALLEYLDANCRTPIGAYSKYLDNGDIQTDFMLGNLDGSKIAFHTEISNPKTSKESGIKAAKVMLLSLS.

S-(dipyrrolylmethanemethyl)cysteine is present on cysteine 242.

Belongs to the HMBS family. In terms of assembly, monomer. Requires dipyrromethane as cofactor.

The enzyme catalyses 4 porphobilinogen + H2O = hydroxymethylbilane + 4 NH4(+). It participates in porphyrin-containing compound metabolism; protoporphyrin-IX biosynthesis; coproporphyrinogen-III from 5-aminolevulinate: step 2/4. Its function is as follows. Tetrapolymerization of the monopyrrole PBG into the hydroxymethylbilane pre-uroporphyrinogen in several discrete steps. The chain is Porphobilinogen deaminase from Rickettsia bellii (strain OSU 85-389).